A 92-amino-acid chain; its full sequence is MAACSRTQVISLYRMLIKESKKFPSYNYRTYALRRVKDSFRENLHVDNPKTLDMLLNQARENLAVIRRQVSIGQMYTAQRTIVEETGVHRDL.

It belongs to the complex I LYR family.

This Salmo salar (Atlantic salmon) protein is LYR motif-containing protein 4A (lyrm4a).